We begin with the raw amino-acid sequence, 171 residues long: Translation initiation factor IF-3 (171 aa).

Belongs to the IF-3 family. Monomer.

The protein resides in the cytoplasm. In terms of biological role, IF-3 binds to the 30S ribosomal subunit and shifts the equilibrium between 70S ribosomes and their 50S and 30S subunits in favor of the free subunits, thus enhancing the availability of 30S subunits on which protein synthesis initiation begins. This chain is Translation initiation factor IF-3, found in Thermus thermophilus (strain ATCC BAA-163 / DSM 7039 / HB27).